The sequence spans 175 residues: Protein GrpE (175 aa).

The disordered stretch occupies residues 1 to 35 (MSEQKQEIENENAQNSENLQDDLQDNEKNETNELQ). A compositionally biased stretch (basic and acidic residues) spans 25–35 (DNEKNETNELQ).

Belongs to the GrpE family. In terms of assembly, homodimer.

It is found in the cytoplasm. Functionally, participates actively in the response to hyperosmotic and heat shock by preventing the aggregation of stress-denatured proteins, in association with DnaK and GrpE. It is the nucleotide exchange factor for DnaK and may function as a thermosensor. Unfolded proteins bind initially to DnaJ; upon interaction with the DnaJ-bound protein, DnaK hydrolyzes its bound ATP, resulting in the formation of a stable complex. GrpE releases ADP from DnaK; ATP binding to DnaK triggers the release of the substrate protein, thus completing the reaction cycle. Several rounds of ATP-dependent interactions between DnaJ, DnaK and GrpE are required for fully efficient folding. The polypeptide is Protein GrpE (Campylobacter jejuni (strain RM1221)).